Reading from the N-terminus, the 122-residue chain is Large ribosomal subunit protein uL14 (122 aa).

This sequence belongs to the universal ribosomal protein uL14 family. In terms of assembly, part of the 50S ribosomal subunit. Forms a cluster with proteins L3 and L19. In the 70S ribosome, L14 and L19 interact and together make contacts with the 16S rRNA in bridges B5 and B8.

Binds to 23S rRNA. Forms part of two intersubunit bridges in the 70S ribosome. This chain is Large ribosomal subunit protein uL14, found in Synechococcus sp. (strain JA-3-3Ab) (Cyanobacteria bacterium Yellowstone A-Prime).